A 32-amino-acid polypeptide reads, in one-letter code: GILDSFKGVAKGVAKDLAGKLLDKLKCKITGC.

A disulfide bond links Cys-27 and Cys-32.

Expressed by the skin glands.

Its subcellular location is the secreted. Its function is as follows. Antibacterial activity against Gram-positive bacterium S.aureus and Gram-negative bacterium E.coli. Weak activity against C.albicans. The chain is Ranatuerin-2La from Rana luteiventris (Columbia spotted frog).